Reading from the N-terminus, the 180-residue chain is Large ribosomal subunit protein uL5 (180 aa).

It belongs to the universal ribosomal protein uL5 family. In terms of assembly, part of the 50S ribosomal subunit; part of the 5S rRNA/L5/L18/L25 subcomplex. Contacts the 5S rRNA and the P site tRNA. Forms a bridge to the 30S subunit in the 70S ribosome.

This is one of the proteins that bind and probably mediate the attachment of the 5S RNA into the large ribosomal subunit, where it forms part of the central protuberance. In the 70S ribosome it contacts protein S13 of the 30S subunit (bridge B1b), connecting the 2 subunits; this bridge is implicated in subunit movement. Contacts the P site tRNA; the 5S rRNA and some of its associated proteins might help stabilize positioning of ribosome-bound tRNAs. This is Large ribosomal subunit protein uL5 from Streptococcus pneumoniae (strain JJA).